The sequence spans 369 residues: 3 beta-hydroxysteroid dehydrogenase type 7 (369 aa).

Tyr-159 acts as the Proton acceptor in catalysis. Lys-163 serves as a coordination point for NAD(+). Transmembrane regions (helical) follow at residues 289–309 and 312–334; these read LLPY…QWLL and LVLY…FTVS.

The protein belongs to the 3-beta-HSD family. As to expression, predominantly expressed in liver.

It is found in the endoplasmic reticulum membrane. The enzyme catalyses 7alpha-hydroxycholesterol + NAD(+) = 7alpha-hydroxycholest-4-en-3-one + NADH + H(+). It carries out the reaction 7alpha,25-dihydroxycholesterol + NAD(+) = 7alpha,25-dihydroxy-4-cholesten-3-one + NADH + H(+). It catalyses the reaction (25R)-cholest-5-en-3beta,7alpha,26-triol + NAD(+) = (25R)-7alpha,26-dihydroxycholest-4-en-3-one + NADH + H(+). The catalysed reaction is (24S)-7alpha-dihydroxycholesterol + NAD(+) = (24S)-7alpha,24-dihydroxycholest-4-en-3-one + NADH + H(+). Its pathway is lipid metabolism; steroid biosynthesis. In terms of biological role, the 3-beta-HSD enzymatic system plays a crucial role in the biosynthesis of all classes of hormonal steroids. HSD VII is active against four 7-alpha-hydroxylated sterols. Does not metabolize several different C(19/21) steroids as substrates. Involved in bile acid synthesis. Plays a key role in cell positioning and movement in lymphoid tissues by mediating degradation of 7-alpha,25-dihydroxycholesterol (7-alpha,25-OHC): 7-alpha,25-OHC acts as a ligand for the G protein-coupled receptor GPR183/EBI2, a chemotactic receptor for a number of lymphoid cells. The polypeptide is 3 beta-hydroxysteroid dehydrogenase type 7 (Mus musculus (Mouse)).